We begin with the raw amino-acid sequence, 481 residues long: Glutamyl-tRNA(Gln) amidotransferase subunit A (481 aa).

Residues K74 and S149 each act as charge relay system in the active site. S173 serves as the catalytic Acyl-ester intermediate.

The protein belongs to the amidase family. GatA subfamily. In terms of assembly, heterotrimer of A, B and C subunits.

The enzyme catalyses L-glutamyl-tRNA(Gln) + L-glutamine + ATP + H2O = L-glutaminyl-tRNA(Gln) + L-glutamate + ADP + phosphate + H(+). Allows the formation of correctly charged Gln-tRNA(Gln) through the transamidation of misacylated Glu-tRNA(Gln) in organisms which lack glutaminyl-tRNA synthetase. The reaction takes place in the presence of glutamine and ATP through an activated gamma-phospho-Glu-tRNA(Gln). The chain is Glutamyl-tRNA(Gln) amidotransferase subunit A from Francisella tularensis subsp. tularensis (strain FSC 198).